A 412-amino-acid chain; its full sequence is Argininosuccinate synthase (412 aa).

Residues A10–S18 and A36 each bind ATP. L-citrulline contacts are provided by Y87 and S92. The residue at position 87 (Y87) is a Phosphotyrosine. K112 carries the N6-acetyllysine modification. Y113 carries the post-translational modification Phosphotyrosine. S115–N123 is an ATP binding site. 3 residues coordinate L-aspartate: T119, N123, and D124. N123 contacts L-citrulline. L-citrulline is bound at residue R127. N6-acetyllysine; by CLOCK is present on residues K165 and K176. Phosphoserine occurs at positions 177 and 180. Positions 180 and 189 each coordinate L-citrulline. S219 bears the Phosphoserine mark. Residues E270 and Y282 each contribute to the L-citrulline site.

Belongs to the argininosuccinate synthase family. Type 1 subfamily. Homotetramer. Interacts with NMRAL1. Interacts with CLOCK; in a circadian manner. Forms tissue-specific complexes with ASL, SLC7A1, HSP90AA1 and nitric oxide synthase NOS1, NOS2 or NOS3; the complex regulates cell-autonomous L-arginine synthesis and citrulline recycling while channeling extracellular L-arginine to nitric oxide synthesis pathway. In terms of processing, acetylated by CLOCK in a circadian manner which negatively regulates its enzyme activity. Deacetylated by histone deacetylases. As to expression, widely expressed.

The protein resides in the cytoplasm. It is found in the cytosol. It carries out the reaction L-citrulline + L-aspartate + ATP = 2-(N(omega)-L-arginino)succinate + AMP + diphosphate + H(+). It participates in amino-acid biosynthesis; L-arginine biosynthesis; L-arginine from L-ornithine and carbamoyl phosphate: step 2/3. The protein operates within nitrogen metabolism; urea cycle; (N(omega)-L-arginino)succinate from L-aspartate and L-citrulline: step 1/1. Its function is as follows. One of the enzymes of the urea cycle, the metabolic pathway transforming neurotoxic amonia produced by protein catabolism into inocuous urea in the liver of ureotelic animals. Catalyzes the formation of arginosuccinate from aspartate, citrulline and ATP and together with ASL it is responsible for the biosynthesis of arginine in most body tissues. The polypeptide is Argininosuccinate synthase (Mus musculus (Mouse)).